Consider the following 180-residue polypeptide: Endoribonuclease YbeY (180 aa).

Zn(2+) contacts are provided by H118, H122, and H128.

Belongs to the endoribonuclease YbeY family. The cofactor is Zn(2+).

It is found in the cytoplasm. Single strand-specific metallo-endoribonuclease involved in late-stage 70S ribosome quality control and in maturation of the 3' terminus of the 16S rRNA. In Rhodococcus opacus (strain B4), this protein is Endoribonuclease YbeY.